A 154-amino-acid chain; its full sequence is Iron-sulfur cluster assembly 2 homolog, mitochondrial (154 aa).

Residues 1-8 constitute a mitochondrion transit peptide; it reads MAAARGLS. The Fe cation site is built by cysteine 79, cysteine 144, and cysteine 146.

This sequence belongs to the HesB/IscA family. As to quaternary structure, heterotetramer; forms a dimer of dimers with IBA57. Interacts with [2Fe-2S]-ISCA2 forming the heterodimer [2Fe- 2S]-ISCA2-IBA57 complex; [2Fe-2S] cluster binding is absolutely required to promote the complex formation.

It is found in the mitochondrion. Its function is as follows. Involved in the maturation of mitochondrial 4Fe-4S proteins functioning late in the iron-sulfur cluster assembly pathway. May be involved in the binding of an intermediate of Fe/S cluster assembly. The chain is Iron-sulfur cluster assembly 2 homolog, mitochondrial (ISCA2) from Pongo abelii (Sumatran orangutan).